A 432-amino-acid polypeptide reads, in one-letter code: Gamma-glutamyl phosphate reductase (432 aa).

This sequence belongs to the gamma-glutamyl phosphate reductase family.

The protein localises to the cytoplasm. The enzyme catalyses L-glutamate 5-semialdehyde + phosphate + NADP(+) = L-glutamyl 5-phosphate + NADPH + H(+). The protein operates within amino-acid biosynthesis; L-proline biosynthesis; L-glutamate 5-semialdehyde from L-glutamate: step 2/2. Its function is as follows. Catalyzes the NADPH-dependent reduction of L-glutamate 5-phosphate into L-glutamate 5-semialdehyde and phosphate. The product spontaneously undergoes cyclization to form 1-pyrroline-5-carboxylate. The chain is Gamma-glutamyl phosphate reductase from Corynebacterium glutamicum (strain R).